Reading from the N-terminus, the 95-residue chain is MSLDAAVKKQIITEFGTKEGDTGSPEVQVALLSRRISDLTEHLKTHKHDHHSRRGLLILVGQRRRLLQYLAKKDIQRFRALVERLGIRRGAAGAR.

Belongs to the universal ribosomal protein uS15 family. In terms of assembly, part of the 30S ribosomal subunit. Forms a bridge to the 50S subunit in the 70S ribosome, contacting the 23S rRNA.

One of the primary rRNA binding proteins, it binds directly to 16S rRNA where it helps nucleate assembly of the platform of the 30S subunit by binding and bridging several RNA helices of the 16S rRNA. Its function is as follows. Forms an intersubunit bridge (bridge B4) with the 23S rRNA of the 50S subunit in the ribosome. The chain is Small ribosomal subunit protein uS15 from Streptomyces coelicolor (strain ATCC BAA-471 / A3(2) / M145).